We begin with the raw amino-acid sequence, 512 residues long: MEEFKGYLQKGGFKQQHFLYPLLFQEYIYGLAHDQGLNVNASTFNEPPEISGYGNKYSSLLVKRLIIRIYQQNSFLYSVNNSKQNRFVGHNKNYYYKMICEGFSIVVEIPFSLRLVSSIKETKEIMKFQNLRSIHSLFPFLEDKFSHLNSVSDIVIPYPIHLEILLQILQCWIQDVPTLHLLRLIFYDYHNRSNSITPNKSSYGFSKDNPRLYRFLYNSYVVECESIFYFLRKSSSYLRSTSFRPLLERTHFYGKMKHIGVTCCNDFQKTLWLFKDPFMHYVRYQGKCIIASKGTHLLMKKWKSYFVNLWQCHFHFWSQPSRIHINQFPHFSFYFLGYLSSVPINLSSAKSQMLENAFLIDTFTPKFETMISIIPMIGSLAKAKFCNLSGNPISKPAWAELSDSDIIDRFGRIYRNLSHYYSGSSKKQSLYRIKYILRLSCARTLARKHKSTVRAFLQRLGSEFFEEFFMEEEKVLSLILPRTYYPLHQLSREPIWYLDIIRINDLVNHFDL.

The protein belongs to the intron maturase 2 family. MatK subfamily.

Its subcellular location is the plastid. It localises to the chloroplast. Functionally, usually encoded in the trnK tRNA gene intron. Probably assists in splicing its own and other chloroplast group II introns. This chain is Maturase K, found in Lemna gibba (Swollen duckweed).